The sequence spans 1039 residues: MKLFPRTLLKILVVSFILNFGVTSKSYADDTLDTIVNTLQNLTCETQGVGDLLRTEFSQTCIVAPFFTFAIMNLVSPVLYMNTFLKLRINDNELFGTQFPGGQCTRENRADPNDLKLTFGLCSNLKLAGVRAKAVVDSALAIAKAVLTGNDPWDDIKEAWKNNKADYYNIYTQKPEDSGTMWDLGVPIFWKVVQDNDRICVGTYGFTGVVPVGCKYIKEPFPKSMYNSFMDVNDTNFIDDPNNKAVDPLALVSCSAAGGGCYQKAYNASRTAVVMTSPLIECIRQMIARLLISEDVCSFDDVNAVVNSASRQTSALFQFQVGMYRIVTAFLTLYVMLFGAKILLAGQVPPKNEYINFILKIIFVTYFSIGLNITPGSTSPYDRMDGMIQWAFPFLLNGINGLASWVMNAAPSGLCKFNGPDISYDNSVAYIALWDALDCRVAHYLGLDMLSTLLVENTYKSHNFANFDFFSFSAPPYIYLLIPAIISGNMMLVSLALAYPLLVISVAAFMVNATVMCMVSIVILGILAPLFVPMFLFDYTRGYFDSWVKLMISFLLQPMVVVTFMITMFSVYDFGFYGKCQYQSKLIHNSIEGALQGQTFKRDVLVFFVDNDWTKYSKEDAESCQNSLGYMLNNPISTAFNFAKDSVEQIVGSKPNQTCDPKAADADTKCNPKPGDSSTSSFLSKFQFLSGVILGPGMFFVSPKLLFEKIKDILLALVTACFTLYLMYNFSSQLANFAADMTEGVALSSVAIKPQAVFKAAMAALAAAGNATKGLDQFATKGGGGGDLLSTKGGRAGDLVKGSGGGGGSEGGDSFTSGGLRETSSTAATPSSALSSVGKSVGGTATPSSASEEMLDTSFSNRKPIEAPVSQPTTVSTQIDTAIKTEPPKVSAAEVVRNTAEDKLEDLSSKLNVTKEIKEAVPESQKEEPKEPRVKHTTEVEPELNLDENLGVTRTIRGLDKDRKFTEQESHELKIGEAGYVKQEMRNAQIRDRRAAFEKETEELYRSVGGRAKDKATERNDGTIENRSKKIDSGSDENP.

The first 28 residues, 1–28 (MKLFPRTLLKILVVSFILNFGVTSKSYA), serve as a signal peptide directing secretion. 6 helical membrane-spanning segments follow: residues 326–346 (IVTA…LLAG), 354–374 (YINF…LNIT), 387–407 (MIQW…SWVM), 491–511 (MLVS…AFMV), 517–537 (CMVS…MFLF), and 551–571 (MISF…MFSV). Residues 654–680 (KPNQTCDPKAADADTKCNPKPGDSSTS) form a disordered region. Residues 710-730 (IKDILLALVTACFTLYLMYNF) form a helical membrane-spanning segment. Disordered stretches follow at residues 799–875 (LVKG…PTTV), 917–949 (IKEA…LDEN), and 1004–1039 (LYRS…DENP). Residues 802 to 811 (GSGGGGGSEG) show a composition bias toward gly residues. The segment covering 812-836 (GDSFTSGGLRETSSTAATPSSALSS) has biased composition (low complexity). Positions 843–861 (GTATPSSASEEMLDTSFSN) are enriched in polar residues. Composition is skewed to basic and acidic residues over residues 917-939 (IKEA…HTTE) and 1004-1033 (LYRS…KIDS).

This sequence belongs to the TrbL/VirB6 family.

Its subcellular location is the cell membrane. This is an uncharacterized protein from Rickettsia bellii (strain RML369-C).